Consider the following 324-residue polypeptide: tRNA dimethylallyltransferase (324 aa).

ATP is bound at residue Gly17–Thr24. Thr19–Thr24 provides a ligand contact to substrate. 4 interaction with substrate tRNA regions span residues Asp42–Leu45, Gln166–Arg170, Arg251–Arg256, and Lys284–Arg291.

Belongs to the IPP transferase family. Monomer. The cofactor is Mg(2+).

It catalyses the reaction adenosine(37) in tRNA + dimethylallyl diphosphate = N(6)-dimethylallyladenosine(37) in tRNA + diphosphate. In terms of biological role, catalyzes the transfer of a dimethylallyl group onto the adenine at position 37 in tRNAs that read codons beginning with uridine, leading to the formation of N6-(dimethylallyl)adenosine (i(6)A). The polypeptide is tRNA dimethylallyltransferase (Burkholderia orbicola (strain AU 1054)).